The chain runs to 827 residues: Lon protease (827 aa).

In terms of domain architecture, Lon N-terminal spans 38-233 (LTLLASKYNV…VLLKYLLKDL (196 aa)). 384-391 (GPPGVGKT) serves as a coordination point for ATP. Residues 619–800 (THLPGVAIGL…EEVIQLALQP (182 aa)) form the Lon proteolytic domain. Active-site residues include serine 706 and lysine 749.

Belongs to the peptidase S16 family. In terms of assembly, homohexamer. Organized in a ring with a central cavity.

It localises to the cytoplasm. It catalyses the reaction Hydrolysis of proteins in presence of ATP.. Its function is as follows. ATP-dependent serine protease that mediates the selective degradation of mutant and abnormal proteins as well as certain short-lived regulatory proteins. Required for cellular homeostasis and for survival from DNA damage and developmental changes induced by stress. Degrades polypeptides processively to yield small peptide fragments that are 5 to 10 amino acids long. Binds to DNA in a double-stranded, site-specific manner. This chain is Lon protease, found in Amoebophilus asiaticus (strain 5a2).